Reading from the N-terminus, the 523-residue chain is MSTDHIRRPIRRALISVYDKTGLVDLAQGLTAAGVEIVSTGSTAKTIASKGIPVTRVEELTGFPEVLDGRVKTLHPRVHAGLLADLRNPEHEAALAELGVEAFELVVVNLYPFSQTVESGASVDECVEQIDIGGPSMVRAAAKNHPSVAVVTDPQGYDGVLAAVRSGGFTFAERKKLASLAFQHTAEYDIAVASWMQSTVAPEQPETDFPRWFGRNWRRQAMLRYGENPHQQAALYADPGAWPGLAQAEQLHGKEMSYNNFTDADAAWRAAFDHEQKCVAIIKHANPCGIAISEVSVADAHRKAHACDPLSAYGGVIACNTEVSPEMAEYVSTIFTEVIVAPAYAPAALDQLTKKKNIRVLVASEPQDGGAELRPISGGLLMQQRDQLDAAGDNPANWILATGSPADPATLTDLVFAWRSCRAVKSNAIVIVADGATIGVGMGQVNRVDAARLAVERGGERVNGAVAASDAFFPFPDGLETLTAAGVKAIVHPGGSVRDEEVTAAAAKAGITLYLTGSRHFVH.

In terms of domain architecture, MGS-like spans 4–152 (DHIRRPIRRA…KNHPSVAVVT (149 aa)).

It belongs to the PurH family.

The catalysed reaction is (6R)-10-formyltetrahydrofolate + 5-amino-1-(5-phospho-beta-D-ribosyl)imidazole-4-carboxamide = 5-formamido-1-(5-phospho-D-ribosyl)imidazole-4-carboxamide + (6S)-5,6,7,8-tetrahydrofolate. The enzyme catalyses IMP + H2O = 5-formamido-1-(5-phospho-D-ribosyl)imidazole-4-carboxamide. The protein operates within purine metabolism; IMP biosynthesis via de novo pathway; 5-formamido-1-(5-phospho-D-ribosyl)imidazole-4-carboxamide from 5-amino-1-(5-phospho-D-ribosyl)imidazole-4-carboxamide (10-formyl THF route): step 1/1. It participates in purine metabolism; IMP biosynthesis via de novo pathway; IMP from 5-formamido-1-(5-phospho-D-ribosyl)imidazole-4-carboxamide: step 1/1. In Mycobacterium ulcerans (strain Agy99), this protein is Bifunctional purine biosynthesis protein PurH.